The sequence spans 340 residues: NADH-quinone oxidoreductase subunit H (340 aa).

The next 8 membrane-spanning stretches (helical) occupy residues Thr-4 to Ile-24, Tyr-78 to Ile-98, Val-113 to Ala-133, Val-151 to Met-171, Met-184 to Ile-204, Ser-244 to Phe-264, Ile-273 to Val-293, and Val-316 to Val-336.

Belongs to the complex I subunit 1 family. In terms of assembly, NDH-1 is composed of 14 different subunits. Subunits NuoA, H, J, K, L, M, N constitute the membrane sector of the complex.

The protein localises to the cell inner membrane. It catalyses the reaction a quinone + NADH + 5 H(+)(in) = a quinol + NAD(+) + 4 H(+)(out). Its function is as follows. NDH-1 shuttles electrons from NADH, via FMN and iron-sulfur (Fe-S) centers, to quinones in the respiratory chain. The immediate electron acceptor for the enzyme in this species is believed to be ubiquinone. Couples the redox reaction to proton translocation (for every two electrons transferred, four hydrogen ions are translocated across the cytoplasmic membrane), and thus conserves the redox energy in a proton gradient. This subunit may bind ubiquinone. The sequence is that of NADH-quinone oxidoreductase subunit H from Legionella pneumophila subsp. pneumophila (strain Philadelphia 1 / ATCC 33152 / DSM 7513).